The sequence spans 292 residues: Retinal homeobox protein Rx3 (292 aa).

The tract at residues 1–27 is disordered; the sequence is MRLVGSQYKDMEDRLSPSARLVRSPGS. The Octapeptide motif signature appears at 32-39; the sequence is HSIESILG. Disordered stretches follow at residues 53–72 and 85–107; these read GSGKTGKDTEHLSPKKDSNK and SPDLPDADGGKLSDDENPKKKHR. 2 stretches are compositionally biased toward basic and acidic residues: residues 57–72 and 92–102; these read TGKDTEHLSPKKDSNK and DGGKLSDDENP. Positions 106–165 form a DNA-binding region, homeobox; sequence HRRNRTTFTTFQLHELERAFEKSHYPDVYSREELALKVNLPEVRVQVWFQNRRAKWRRQE. An OAR motif is present at residues 272–285; sequence TSIASLRMKAKEHI. Positions 278-282 match the Nuclear localization signal motif; sequence RMKAK.

Belongs to the paired homeobox family. Bicoid subfamily.

The protein localises to the nucleus. In terms of biological role, plays a critical role in eye formation by regulating the initial specification of retinal cells and/or their subsequent proliferation. The polypeptide is Retinal homeobox protein Rx3 (rx3) (Danio rerio (Zebrafish)).